The following is a 262-amino-acid chain: tRNA pseudouridine synthase A (262 aa).

Aspartate 51 (nucleophile) is an active-site residue. Tyrosine 109 serves as a coordination point for substrate.

This sequence belongs to the tRNA pseudouridine synthase TruA family. Homodimer.

It catalyses the reaction uridine(38/39/40) in tRNA = pseudouridine(38/39/40) in tRNA. In terms of biological role, formation of pseudouridine at positions 38, 39 and 40 in the anticodon stem and loop of transfer RNAs. In Aliivibrio fischeri (strain ATCC 700601 / ES114) (Vibrio fischeri), this protein is tRNA pseudouridine synthase A.